Here is a 335-residue protein sequence, read N- to C-terminus: Glycerol-3-phosphate dehydrogenase [NAD(P)+] (335 aa).

NADPH-binding residues include S10, F11, R31, and K105. Sn-glycerol 3-phosphate contacts are provided by K105, G136, and S138. A140 contacts NADPH. Residues K191, D244, S254, R255, and N256 each coordinate sn-glycerol 3-phosphate. The active-site Proton acceptor is the K191. R255 serves as a coordination point for NADPH. Residues V279 and E281 each contribute to the NADPH site.

It belongs to the NAD-dependent glycerol-3-phosphate dehydrogenase family.

It localises to the cytoplasm. The catalysed reaction is sn-glycerol 3-phosphate + NAD(+) = dihydroxyacetone phosphate + NADH + H(+). The enzyme catalyses sn-glycerol 3-phosphate + NADP(+) = dihydroxyacetone phosphate + NADPH + H(+). It participates in membrane lipid metabolism; glycerophospholipid metabolism. Functionally, catalyzes the reduction of the glycolytic intermediate dihydroxyacetone phosphate (DHAP) to sn-glycerol 3-phosphate (G3P), the key precursor for phospholipid synthesis. The polypeptide is Glycerol-3-phosphate dehydrogenase [NAD(P)+] (Leptospira interrogans serogroup Icterohaemorrhagiae serovar copenhageni (strain Fiocruz L1-130)).